Reading from the N-terminus, the 155-residue chain is 3-dehydroquinate dehydratase (155 aa).

Tyrosine 31 functions as the Proton acceptor in the catalytic mechanism. Residues asparagine 83, histidine 89, and aspartate 96 each contribute to the substrate site. Histidine 109 acts as the Proton donor in catalysis. Substrate-binding positions include 110-111 (LS) and arginine 120.

It belongs to the type-II 3-dehydroquinase family. As to quaternary structure, homododecamer.

The enzyme catalyses 3-dehydroquinate = 3-dehydroshikimate + H2O. It functions in the pathway metabolic intermediate biosynthesis; chorismate biosynthesis; chorismate from D-erythrose 4-phosphate and phosphoenolpyruvate: step 3/7. Functionally, catalyzes a trans-dehydration via an enolate intermediate. The protein is 3-dehydroquinate dehydratase of Laribacter hongkongensis (strain HLHK9).